The following is a 192-amino-acid chain: Nucleoside triphosphate pyrophosphatase (192 aa).

The active-site Proton acceptor is Asp-73.

It belongs to the Maf family. Requires a divalent metal cation as cofactor.

Its subcellular location is the cytoplasm. It carries out the reaction a ribonucleoside 5'-triphosphate + H2O = a ribonucleoside 5'-phosphate + diphosphate + H(+). The catalysed reaction is a 2'-deoxyribonucleoside 5'-triphosphate + H2O = a 2'-deoxyribonucleoside 5'-phosphate + diphosphate + H(+). Functionally, nucleoside triphosphate pyrophosphatase. May have a dual role in cell division arrest and in preventing the incorporation of modified nucleotides into cellular nucleic acids. The polypeptide is Nucleoside triphosphate pyrophosphatase (Ehrlichia canis (strain Jake)).